Reading from the N-terminus, the 609-residue chain is Phosphoenolpyruvate carboxykinase [GTP] (609 aa).

Residues Arg81 and 220–222 (YGG) contribute to the substrate site. 2 residues coordinate Mn(2+): Lys229 and His249. Ser271 provides a ligand contact to substrate. 272–277 (ACGKTN) contributes to the GTP binding site. Cys273 is a catalytic residue. Residue Asp296 participates in Mn(2+) binding. 387 to 389 (NSR) contributes to the substrate binding site. GTP contacts are provided by residues Arg389, Arg420, and 515–518 (FGEN).

Belongs to the phosphoenolpyruvate carboxykinase [GTP] family. In terms of assembly, monomer. Mn(2+) serves as cofactor.

It is found in the cytoplasm. It carries out the reaction oxaloacetate + GTP = phosphoenolpyruvate + GDP + CO2. Its pathway is carbohydrate biosynthesis; gluconeogenesis. In terms of biological role, catalyzes the conversion of oxaloacetate (OAA) to phosphoenolpyruvate (PEP), the rate-limiting step in the metabolic pathway that produces glucose from lactate and other precursors derived from the citric acid cycle. In Mycolicibacterium paratuberculosis (strain ATCC BAA-968 / K-10) (Mycobacterium paratuberculosis), this protein is Phosphoenolpyruvate carboxykinase [GTP].